The sequence spans 2161 residues: SH3 and multiple ankyrin repeat domains protein 1 (2161 aa).

The interval 1 to 53 (MTHSPATSEDEERHSASECPEGGSESDSSPDGPGRGPRGTRGQGSGAPGSLAS) is disordered. Over residues 17–32 (SECPEGGSESDSSPDG) the composition is skewed to low complexity. The span at 33 to 47 (PGRGPRGTRGQGSGA) shows a compositional bias: gly residues. At Tyr-186 the chain carries Phosphotyrosine. ANK repeat units follow at residues 212–245 (SGETPLTLAAQTEGSVEVIRTLCLGGAHIDFRAR), 246–278 (DGMTALHKAACARHCLALTALLDLGGSPNYKDR), 279–312 (RGLTPLFHTAMVGGDPRCCELLLFNRAQLGIADE), 313–345 (NGWQEIHQACQRGHSQHLEHLLFYGAEPGAQNA), 346–378 (SGNTALHICALYNKETCARILLYRGADKDVKNN), and 379–395 (NGQTPFQVAVIAGNFEL). 2 disordered regions span residues 412-433 (ESPKYAARRRGPPGTGLTVPPA) and 455-546 (GAAS…SRGR). The span at 455–479 (GAASSGAPGPTSGSQGQSQPSAPTT) shows a compositional bias: low complexity. A compositionally biased stretch (gly residues) spans 527–542 (PAGGTGGSGGPGGSLG). Ser-540 is modified (phosphoserine). Residue Arg-544 is modified to Omega-N-methylarginine. Positions 554–613 (VPGRSFMAVKSYQAQAEGEISLSKGEKIKVLSIGEGGFWEGQVKGRVGWFPSDCLEEVAN) constitute an SH3 domain. In terms of domain architecture, PDZ spans 663–757 (TVLLQKKDSE…TLMVKVVMVT (95 aa)). Residues Ser-671 and Ser-791 each carry the phosphoserine modification. Positions 832 to 886 (TISASESPGPGGLASLGKHRPKGFFATESSFDPHHRAQPSYERPSFLPPGPGLML) are disordered. Ser-890 bears the Phosphoserine mark. 7 disordered regions span residues 909–1229 (SRSL…LDFT), 1241–1289 (RREG…KSID), 1353–1720 (LGLA…GVAS), 1734–1785 (GQAF…PTSP), 1827–1860 (LPTASSLPRKLLPWEEGPGPPPPPLPGPLAQPQA), 1892–1983 (PWAR…TRHL), and 1996–2023 (RRAPSPSLLPASEHKVSPAPRPSSLPIL). Residues 920–939 (IPPPPTTSPPEPPYSTPPVP) are compositionally biased toward pro residues. Arg-950 bears the Omega-N-methylarginine mark. Positions 996 to 1020 (AHHHPPHHHHHHAPPPQPHHHHAHP) are enriched in basic residues. 3 positions are modified to omega-N-methylarginine: Arg-1051, Arg-1090, and Arg-1101. Positions 1127–1144 (PPAPSPTSPASPQPPPAV) are enriched in pro residues. Over residues 1164–1181 (STSSSGRSSQGSSTEAEP) the composition is skewed to low complexity. Over residues 1199–1220 (SPAPAMSPVPPSPSPVPTPASP) the composition is skewed to pro residues. Basic and acidic residues predominate over residues 1241–1252 (RREGGWQNEARR). Arg-1253 is modified (asymmetric dimethylarginine). At Ser-1287 the chain carries Phosphoserine. Over residues 1359-1368 (ARERALKESS) the composition is skewed to basic and acidic residues. Residues 1374–1391 (PQPPPRPPSPRYEAPPPT) are compositionally biased toward pro residues. The residue at position 1423 (Arg-1423) is an Omega-N-methylarginine. The residue at position 1436 (Ser-1436) is a Phosphoserine. Composition is skewed to pro residues over residues 1517–1532 (GVPPPSPRRSVPPSPT) and 1583–1609 (PLTPGPPHPLPDTPAPATPLPPVPPPA). A compositionally biased stretch (polar residues) spans 1618 to 1636 (DSTASSLTSYDSEVATLTQ). Over residues 1644–1670 (DPHPPGPPAPAAPAPAAPQPGPDPPPG) the composition is skewed to pro residues. Positions 1678 to 1688 (VDSRSSSDHPL) are enriched in basic and acidic residues. A compositionally biased stretch (low complexity) spans 1692–1702 (SSASTLSSLSA). Gly residues-rich tracts occupy residues 1703–1718 (EGGGSAGGGGGAGAGV) and 1764–1774 (ASGGLRPGPSG). Positions 1775 to 1785 (GLRDPVTPTSP) are enriched in low complexity. Pro residues predominate over residues 1844 to 1855 (PGPPPPPLPGPL). The residue at position 1895 (Arg-1895) is an Omega-N-methylarginine. 3 stretches are compositionally biased toward low complexity: residues 1917-1940 (SSLQRQRLSDDSQSSLLSKPVSSL), 1954-1980 (TGTGVSPTAAAAPGATSPSASSSSTST), and 1996-2006 (RRAPSPSLLPA). Omega-N-methylarginine is present on residues Arg-2016, Arg-2036, and Arg-2074. The 64-residue stretch at 2098 to 2161 (WTKFDVADWL…DRALKFFLER (64 aa)) folds into the SAM domain.

Belongs to the SHANK family. As to quaternary structure, may homomultimerize via its SAM domain. Interacts with the C-terminus of SSTR2 via the PDZ domain. Interacts with IGSF9, SHARPIN, SPTAN1, HOMER1 and DLGAP1/GKAP isoforms 1 and 2. Part of a complex with DLG4/PSD-95 and DLGAP1/GKAP. Interacts with BAIAP2. Interacts with HOMER1 and HOMER3. As to expression, expressed in brain particularly in the amygdala, hippocampus, substantia nigra and thalamus. Isoform 2 seems to be expressed ubiquitously.

The protein localises to the cytoplasm. It localises to the postsynaptic density. The protein resides in the synapse. In terms of biological role, seems to be an adapter protein in the postsynaptic density (PSD) of excitatory synapses that interconnects receptors of the postsynaptic membrane including NMDA-type and metabotropic glutamate receptors via complexes with GKAP/PSD-95 and Homer, respectively, and the actin-based cytoskeleton. Plays a role in the structural and functional organization of the dendritic spine and synaptic junction. The protein is SH3 and multiple ankyrin repeat domains protein 1 (SHANK1) of Homo sapiens (Human).